We begin with the raw amino-acid sequence, 331 residues long: Cytosolic sulfotransferase 1 (331 aa).

Position 74-79 (74-79) interacts with 3'-phosphoadenylyl sulfate; sequence KSGTTW. The Proton acceptor role is filled by H143. 3'-phosphoadenylyl sulfate contacts are provided by residues R165, S173, Y231, and 297 to 299; that span reads RKG.

The protein belongs to the sulfotransferase 1 family.

It is found in the cytoplasm. Its function is as follows. Sulfotransferase that utilizes 3'-phospho-5'-adenylyl sulfate (PAPS) as sulfonate donor. This Arabidopsis thaliana (Mouse-ear cress) protein is Cytosolic sulfotransferase 1 (SOT1).